A 98-amino-acid polypeptide reads, in one-letter code: MTLVMFNITIAFTLSLLGTLMFRTHLMSTLLCLEGMMLCLFIMAVITSLDTHPMIMYPIPIIILVFAACEAAVGLALLAMVSSTYGTDYVQNLNLLQC.

3 helical membrane passes run 2 to 22, 26 to 46, and 61 to 81; these read TLVM…TLMF, LMST…MAVI, and IIIL…LAMV.

This sequence belongs to the complex I subunit 4L family. In terms of assembly, core subunit of respiratory chain NADH dehydrogenase (Complex I) which is composed of 45 different subunits.

It is found in the mitochondrion inner membrane. It catalyses the reaction a ubiquinone + NADH + 5 H(+)(in) = a ubiquinol + NAD(+) + 4 H(+)(out). Functionally, core subunit of the mitochondrial membrane respiratory chain NADH dehydrogenase (Complex I) which catalyzes electron transfer from NADH through the respiratory chain, using ubiquinone as an electron acceptor. Part of the enzyme membrane arm which is embedded in the lipid bilayer and involved in proton translocation. The polypeptide is NADH-ubiquinone oxidoreductase chain 4L (MT-ND4L) (Nyctomys sumichrasti (Sumichrast's vesper rat)).